A 113-amino-acid chain; its full sequence is Nucleoid-associated protein EUBREC_0329 (113 aa).

Gly residues predominate over residues 1-12; the sequence is MARRGGFPGGMP. Positions 1 to 45 are disordered; sequence MARRGGFPGGMPGNMNNLMKQAQKMQRQMEEAQKQLEDAEVTAKA. The span at 27–37 shows a compositional bias: basic and acidic residues; sequence RQMEEAQKQLE.

It belongs to the YbaB/EbfC family. In terms of assembly, homodimer.

It localises to the cytoplasm. The protein resides in the nucleoid. Binds to DNA and alters its conformation. May be involved in regulation of gene expression, nucleoid organization and DNA protection. This Agathobacter rectalis (strain ATCC 33656 / DSM 3377 / JCM 17463 / KCTC 5835 / VPI 0990) (Eubacterium rectale) protein is Nucleoid-associated protein EUBREC_0329.